The primary structure comprises 235 residues: Ribonuclease S-2 (235 aa).

A signal peptide spans M1–A31. Q41 is a binding site for RNA. C47 and C54 are joined by a disulfide. H66 is a binding site for RNA. The active-site Proton donor is H66. A glycan (N-linked (GlcNAc...) asparagine) is linked at N72. 3 disulfides stabilise this stretch: C80–C129, C189–C217, and C200–C211. RNA contacts are provided by residues D105–L106, R108, and F118. Residue Q122 is part of the active site. RNA is bound at residue K125 to H126. H126 acts as the Proton acceptor in catalysis.

It belongs to the RNase T2 family.

Its subcellular location is the secreted. It is found in the extracellular space. The enzyme catalyses a ribonucleotidyl-ribonucleotide-RNA + H2O = a 3'-end 3'-phospho-ribonucleotide-RNA + a 5'-end dephospho-ribonucleoside-RNA + H(+). In terms of biological role, self-incompatibility (SI) is the inherited ability of a flowering plant to prevent self-fertilization by discriminating between self and non-self pollen during pollination. In many species, self-incompatibility is controlled by the single, multiallelic locus S. This chain is Ribonuclease S-2 (S2), found in Antirrhinum hispanicum (Snapdragon).